The chain runs to 465 residues: MIVFVRFNSSYGFPVEVDSDTSIFQLKEVVAKRQGVPADQLRVIFAGKELQNHLTVQNCDLEQQSIVHIVQRPQRKSHETNASGGDKPQSTPEGSIWEPRSLTRVDLSSHILPADSVGLAVILDTDSKSDSEAARGPEAKPTYHSFFVYCKGPCHKVQPGKLRVQCGTCRQATLTLAQGPSCWDDVLIPNRMSGECQSPDCPGTRAEFFFKCGAHPTSDKDTSVALNLITNNSRSIPCIACTDVRNPVLVFQCNHRHVICLDCFHLYCVTRLNDRQFVHDAQLGYSLPCVAGCPNSLIKELHHFRILGEEQYNRYQQYGAEECVLQMGGVLCPRPGCGAGLLPEQGQKKVTCEGGNGLGCGFVFCRDCKEAYHEGECDSMFEASGATSQAYRVDQRAAEQARWEEASKETIKKTTKPCPRCNVPIEKNGGCMHMKCPQPQCKLEWCWNCGCEWNRACMGDHWFDV.

The 76-residue stretch at 1 to 76 folds into the Ubiquitin-like domain; sequence MIVFVRFNSS…VHIVQRPQRK (76 aa). Ser-65 is modified (phosphoserine; by PINK1). The segment at 71–96 is disordered; it reads QRPQRKSHETNASGGDKPQSTPEGSI. A necessary for PINK1-dependent localization to mitochondria region spans residues 77 to 237; that stretch reads SHETNASGGD…LITNNSRSIP (161 aa). Thr-80 carries the phosphothreonine modification. Polar residues predominate over residues 80-93; that stretch reads TNASGGDKPQSTPE. An RING-type 0; atypical zinc finger spans residues 141–225; it reads PTYHSFFVYC…PTSDKDTSVA (85 aa). Thr-175 carries the post-translational modification Phosphothreonine; by PINK1. The SYT11 binding 1 stretch occupies residues 204-238; it reads TRAEFFFKCGAHPTSDKDTSVALNLITNNSRSIPC. Thr-217 carries the phosphothreonine modification. The interval 234 to 465 is TRIAD supradomain; sequence RSIPCIACTD…ACMGDHWFDV (232 aa). Zn(2+) contacts are provided by Cys-238, Cys-241, Cys-253, His-257, Cys-260, Cys-263, Cys-289, Cys-293, Cys-332, and Cys-337. The RING-type 1 zinc finger occupies 238 to 293; it reads CIACTDVRNPVLVFQCNHRHVICLDCFHLYCVTRLNDRQFVHDAQLGYSLPCVAGC. Residues 257–293 are SYT11 binding 2; that stretch reads HVICLDCFHLYCVTRLNDRQFVHDAQLGYSLPCVAGC. Residues 313 to 377 form an IBR-type zinc finger; it reads NRYQQYGAEE…CKEAYHEGEC (65 aa). Residue Lys-349 forms a Glycyl lysine isopeptide (Lys-Gly) (interchain with G-Cter in ISG15) linkage. Zn(2+) contacts are provided by Cys-352, Cys-360, Cys-365, and Cys-368. A Glycyl lysine isopeptide (Lys-Gly) (interchain with G-Cter in ISG15) cross-link involves residue Lys-369. The Zn(2+) site is built by His-373 and Cys-377. The tract at residues 378–410 is REP; that stretch reads DSMFEASGATSQAYRVDQRAAEQARWEEASKET. 2 residues coordinate Zn(2+): Cys-418 and Cys-421. The segment at 418–449 adopts an RING-type 2; atypical zinc-finger fold; sequence CPRCNVPIEKNGGCMHMKCPQPQCKLEWCWNC. The active site involves Cys-431. Zn(2+) contacts are provided by Cys-436, Cys-441, Cys-446, Cys-449, Cys-457, and His-461.

This sequence belongs to the RBR family. Parkin subfamily. Forms an E3 ubiquitin ligase complex with UBE2L3 or UBE2L6. Mediates 'Lys-63'-linked polyubiquitination by associating with UBE2V1. Part of a SCF-like complex, consisting of PRKN, CUL1 and FBXW7. Interacts with SNCAIP. Binds to the C2A and C2B domains of SYT11. Interacts and regulates the turnover of SEPTIN5. Part of a complex, including STUB1, HSP70 and GPR37. The amount of STUB1 in the complex increases during ER stress. STUB1 promotes the dissociation of HSP70 from PRKN and GPR37, thus facilitating PRKN-mediated GPR37 ubiquitination. HSP70 transiently associates with unfolded GPR37 and inhibits the E3 activity of PRKN, whereas, STUB1 enhances the E3 activity of PRKN through promotion of dissociation of HSP70 from PRKN-GPR37 complexes. Interacts with PSMD4 and PACRG. Interacts with LRRK2. Interacts with RANBP2. Interacts with SUMO1 but not SUMO2, which promotes nuclear localization and autoubiquitination. Interacts (via first RING-type domain) with AIMP2 (via N-terminus). Interacts with PSMA7 and RNF41. Interacts with PINK1. Forms a complex with PINK1 and PARK7. Interacts with CHPF, the interaction with isoform 2 may facilitate PRKN transport into the mitochondria. Interacts with MFN2 (phosphorylated), promotes PRKN localization in dysfunctional depolarized mitochondria. Interacts with FBXO7; this promotes translocation to dysfunctional depolarized mitochondria. Interacts with ZNF746. Interacts with heat shock protein 70 family members, including HSPA1L, HSPA1A and HSPA8; interaction HSPA1L promotes translocation to damaged mitochondria. Interacts with BAG4 and, to a lesser extent, BAG5; interaction with BAG4 inhibits translocation to damaged mitochondria. Forms a complex with PRKN and PARK7. Interacts with AMBRA1. In terms of processing, auto-ubiquitinates in an E2-dependent manner leading to its own degradation. Also polyubiquitinated by RNF41 for proteasomal degradation. S-nitrosylated. Post-translationally, phosphorylated. Activation requires phosphorylation at Ser-65 by PINK1 and binding to PINK1 phosphorylated ubiquitin. Phosphorylation at Thr-175 by PINK1 and at Thr-217 is important for mitochondrial localization. In terms of tissue distribution, largely confined to neuronal elements, including fibers and neuropil. Highly expressed at the forebrain level, in pyramidal cells of layer V, in various cortical regions and cerebellum. Expressed in the nucleus of diagonal band of Broca, nucleus basalis, bed nucleus of the stria terminalis, and olfactory tubercle. Moderate expression is seen in most neurons of the subthalamic nucleus, heart, skeletal muscle and testis. Moderate expression was found in frontal cortex, parietal cortex, cerebellum, heart, skeletal muscle and testis.

The protein resides in the cytoplasm. The protein localises to the cytosol. It localises to the nucleus. It is found in the endoplasmic reticulum. Its subcellular location is the mitochondrion. The protein resides in the mitochondrion outer membrane. The protein localises to the cell projection. It localises to the neuron projection. It is found in the postsynaptic density. Its subcellular location is the presynapse. It carries out the reaction [E2 ubiquitin-conjugating enzyme]-S-ubiquitinyl-L-cysteine + [acceptor protein]-L-lysine = [E2 ubiquitin-conjugating enzyme]-L-cysteine + [acceptor protein]-N(6)-ubiquitinyl-L-lysine.. It participates in protein modification; protein ubiquitination. With respect to regulation, in the autoinhibited state the side chain of Phe-463 inserts into a hydrophobic groove in RING-0, occluding the ubiquitin acceptor site Cys-431, whereas the REP repressor element binds RING-1 and blocks its E2-binding site. Activation of PRKN requires 2 steps: (1) phosphorylation at Ser-65 by PINK1 and (2) binding to phosphorylated ubiquitin, leading to unlock repression of the catalytic Cys-431 by the RING-0 region via an allosteric mechanism and converting PRKN to its fully-active form. According to another report, phosphorylation at Ser-65 by PINK1 is not essential for activation and only binding to phosphorylated ubiquitin is essential to unlock repression. In addition, ISG15 conjugation positively regulates its ubiquitin E3 ligase activity by suppressing the intramolecular interaction that maintains its autoinhibited conformation. Functionally, functions within a multiprotein E3 ubiquitin ligase complex, catalyzing the covalent attachment of ubiquitin moieties onto substrate proteins. Substrates include SYT11 and VDAC1. Other substrates are BCL2, CCNE1, GPR37, RHOT1/MIRO1, MFN1, MFN2, STUB1, SNCAIP, SEPTIN5, TOMM20, USP30, ZNF746, MIRO1 and AIMP2. Mediates monoubiquitination as well as 'Lys-6', 'Lys-11', 'Lys-48'-linked and 'Lys-63'-linked polyubiquitination of substrates depending on the context. Participates in the removal and/or detoxification of abnormally folded or damaged protein by mediating 'Lys-63'-linked polyubiquitination of misfolded proteins such as PARK7: 'Lys-63'-linked polyubiquitinated misfolded proteins are then recognized by HDAC6, leading to their recruitment to aggresomes, followed by degradation. Mediates 'Lys-63'-linked polyubiquitination of a 22 kDa O-linked glycosylated isoform of SNCAIP, possibly playing a role in Lewy-body formation. Mediates monoubiquitination of BCL2, thereby acting as a positive regulator of autophagy. Protects against mitochondrial dysfunction during cellular stress, by acting downstream of PINK1 to coordinate mitochondrial quality control mechanisms that remove and replace dysfunctional mitochondrial components. Depending on the severity of mitochondrial damage and/or dysfunction, activity ranges from preventing apoptosis and stimulating mitochondrial biogenesis to regulating mitochondrial dynamics and eliminating severely damaged mitochondria via mitophagy. Activation and recruitment onto the outer membrane of damaged/dysfunctional mitochondria (OMM) requires PINK1-mediated phosphorylation of both PRKN and ubiquitin. After mitochondrial damage, functions with PINK1 to mediate the decision between mitophagy or preventing apoptosis by inducing either the poly- or monoubiquitination of VDAC1, respectively; polyubiquitination of VDAC1 promotes mitophagy, while monoubiquitination of VDAC1 decreases mitochondrial calcium influx which ultimately inhibits apoptosis. When cellular stress results in irreversible mitochondrial damage, promotes the autophagic degradation of dysfunctional depolarized mitochondria (mitophagy) by promoting the ubiquitination of mitochondrial proteins such as TOMM20, RHOT1/MIRO1, MFN1 and USP30. Preferentially assembles 'Lys-6'-, 'Lys-11'- and 'Lys-63'-linked polyubiquitin chains, leading to mitophagy. The PINK1-PRKN pathway also promotes fission of damaged mitochondria by PINK1-mediated phosphorylation which promotes the PRKN-dependent degradation of mitochondrial proteins involved in fission such as MFN2. This prevents the refusion of unhealthy mitochondria with the mitochondrial network or initiates mitochondrial fragmentation facilitating their later engulfment by autophagosomes. Regulates motility of damaged mitochondria via the ubiquitination and subsequent degradation of MIRO1 and MIRO2; in motor neurons, this likely inhibits mitochondrial intracellular anterograde transport along the axons which probably increases the chance of the mitochondria undergoing mitophagy in the soma. Involved in mitochondrial biogenesis via the 'Lys-48'-linked polyubiquitination of transcriptional repressor ZNF746/PARIS which leads to its subsequent proteasomal degradation and allows activation of the transcription factor PPARGC1A. Limits the production of reactive oxygen species (ROS). Regulates cyclin-E during neuronal apoptosis. In collaboration with CHPF isoform 2, may enhance cell viability and protect cells from oxidative stress. Independently of its ubiquitin ligase activity, protects from apoptosis by the transcriptional repression of p53/TP53. May protect neurons against alpha synuclein toxicity, proteasomal dysfunction, GPR37 accumulation, and kainate-induced excitotoxicity. May play a role in controlling neurotransmitter trafficking at the presynaptic terminal and in calcium-dependent exocytosis. May represent a tumor suppressor gene. The protein is E3 ubiquitin-protein ligase parkin of Rattus norvegicus (Rat).